Reading from the N-terminus, the 195-residue chain is uncharacterized protein (195 aa).

Residues 175-195 (ILGKISGFFGSIVSTIFSLFG) form a helical membrane-spanning segment.

The protein localises to the membrane. This is an uncharacterized protein from Methanocaldococcus jannaschii (strain ATCC 43067 / DSM 2661 / JAL-1 / JCM 10045 / NBRC 100440) (Methanococcus jannaschii).